The sequence spans 384 residues: Putative exopolyphosphatase (384 aa).

The Mn(2+) site is built by D40, D42, D116, H138, and D200.

It belongs to the PPase class C family. Mn(2+) is required as a cofactor.

The catalysed reaction is [phosphate](n) + H2O = [phosphate](n-1) + phosphate + H(+). In terms of biological role, degradation of inorganic polyphosphates. The chain is Putative exopolyphosphatase from Schizosaccharomyces pombe (strain 972 / ATCC 24843) (Fission yeast).